The primary structure comprises 227 residues: Orotate phosphoribosyltransferase (227 aa).

Lys26 is a binding site for 5-phospho-alpha-D-ribose 1-diphosphate. 34 to 35 (FF) contacts orotate. 5-phospho-alpha-D-ribose 1-diphosphate-binding positions include 72–73 (YK), Arg98, Lys99, Lys102, His104, and 123–131 (DDVVSAGLS). Positions 127 and 155 each coordinate orotate.

This sequence belongs to the purine/pyrimidine phosphoribosyltransferase family. PyrE subfamily. In terms of assembly, homodimer. Requires Mg(2+) as cofactor.

The enzyme catalyses orotidine 5'-phosphate + diphosphate = orotate + 5-phospho-alpha-D-ribose 1-diphosphate. The protein operates within pyrimidine metabolism; UMP biosynthesis via de novo pathway; UMP from orotate: step 1/2. Catalyzes the transfer of a ribosyl phosphate group from 5-phosphoribose 1-diphosphate to orotate, leading to the formation of orotidine monophosphate (OMP). This is Orotate phosphoribosyltransferase from Nitrosomonas europaea (strain ATCC 19718 / CIP 103999 / KCTC 2705 / NBRC 14298).